Consider the following 478-residue polypeptide: Aspartyl/glutamyl-tRNA(Asn/Gln) amidotransferase subunit B 2 (478 aa).

Belongs to the GatB/GatE family. GatB subfamily. Heterotrimer of A, B and C subunits.

The enzyme catalyses L-glutamyl-tRNA(Gln) + L-glutamine + ATP + H2O = L-glutaminyl-tRNA(Gln) + L-glutamate + ADP + phosphate + H(+). It carries out the reaction L-aspartyl-tRNA(Asn) + L-glutamine + ATP + H2O = L-asparaginyl-tRNA(Asn) + L-glutamate + ADP + phosphate + 2 H(+). Functionally, allows the formation of correctly charged Asn-tRNA(Asn) or Gln-tRNA(Gln) through the transamidation of misacylated Asp-tRNA(Asn) or Glu-tRNA(Gln) in organisms which lack either or both of asparaginyl-tRNA or glutaminyl-tRNA synthetases. The reaction takes place in the presence of glutamine and ATP through an activated phospho-Asp-tRNA(Asn) or phospho-Glu-tRNA(Gln). This chain is Aspartyl/glutamyl-tRNA(Asn/Gln) amidotransferase subunit B 2 (gatB2), found in Clostridium acetobutylicum (strain ATCC 824 / DSM 792 / JCM 1419 / IAM 19013 / LMG 5710 / NBRC 13948 / NRRL B-527 / VKM B-1787 / 2291 / W).